We begin with the raw amino-acid sequence, 592 residues long: Inactive metallocarboxypeptidase ECM14 (592 aa).

An N-terminal signal peptide occupies residues 1–21 (MRQFTHGTLLAILALANTISA). The propeptide occupies 22 to 174 (IPSFSANNYP…QTVYESYPSS (153 aa)). A compositionally biased stretch (polar residues) spans 170–179 (SYPSSSQRPT). Positions 170-191 (SYPSSSQRPTDNGRGFLPSRES) are disordered. The Peptidase M14 domain occupies 202–521 (DYQPLSVIGP…NAVMVLAKFL (320 aa)). The Zn(2+) site is built by H264 and E267. Residues 264–267 (HARE), R322, and 339–340 (DR) each bind substrate. C333 and C356 are disulfide-bonded. An N-linked (GlcNAc...) asparagine glycan is attached at N349. H396 contributes to the Zn(2+) binding site. Substrate is bound at residue 397–398 (SY). The segment at 542–592 (ADKPILDDGDDDEEEDGQDKKDDSWIPDEYKNDNDHDDDDDGWGLRRRRKR) is disordered. Positions 548–558 (DDGDDDEEEDG) are enriched in acidic residues. The segment covering 559–575 (QDKKDDSWIPDEYKNDN) has biased composition (basic and acidic residues).

This sequence belongs to the peptidase M14 family. It depends on Zn(2+) as a cofactor.

It localises to the vacuole. It is found in the secreted. Its function is as follows. Inactive carboxypeptidase that may play a role in cell wall organization and biogenesis. The protein is Inactive metallocarboxypeptidase ECM14 (ECM14) of Ajellomyces dermatitidis (strain ER-3 / ATCC MYA-2586) (Blastomyces dermatitidis).